A 350-amino-acid chain; its full sequence is tRNA uridine(34) hydroxylase (350 aa).

In terms of domain architecture, Rhodanese spans 146-240 (DDPDAVFIDM…YARRAREQGL (95 aa)). Cys200 serves as the catalytic Cysteine persulfide intermediate. The segment covering 319-328 (RRRRAGRENG) has biased composition (basic and acidic residues). A disordered region spans residues 319–350 (RRRRAGRENGNKIFNKSRGRLNSKLSIPDPAE).

Belongs to the TrhO family.

It catalyses the reaction uridine(34) in tRNA + AH2 + O2 = 5-hydroxyuridine(34) in tRNA + A + H2O. Functionally, catalyzes oxygen-dependent 5-hydroxyuridine (ho5U) modification at position 34 in tRNAs. This chain is tRNA uridine(34) hydroxylase, found in Salmonella agona (strain SL483).